The following is a 70-amino-acid chain: MARQCELTGKKANNGYTVSHSHRRTKCLQKANLQTKRIWSPTLKRWLKLQVSTKVIKDLKRKSIDALLKI.

This sequence belongs to the bacterial ribosomal protein bL28 family.

The protein resides in the plastid. It is found in the cyanelle. In Cyanophora paradoxa, this protein is Large ribosomal subunit protein bL28c (rpl28).